Consider the following 278-residue polypeptide: Ribonuclease HII (278 aa).

Positions 71–259 (WPVAGCDEAG…VAAAWDKHAP (189 aa)) constitute an RNase H type-2 domain. A divalent metal cation contacts are provided by Asp-77, Glu-78, and Asp-168.

The protein belongs to the RNase HII family. The cofactor is Mn(2+). Requires Mg(2+) as cofactor.

The protein resides in the cytoplasm. The enzyme catalyses Endonucleolytic cleavage to 5'-phosphomonoester.. Endonuclease that specifically degrades the RNA of RNA-DNA hybrids. In Rhodopseudomonas palustris (strain BisA53), this protein is Ribonuclease HII.